The primary structure comprises 427 residues: Serine--tRNA ligase (427 aa).

Residue 231-233 (TAE) participates in L-serine binding. 262 to 264 (RSE) serves as a coordination point for ATP. Glu-285 is an L-serine binding site. An ATP-binding site is contributed by 349–352 (EISS). Ser-385 provides a ligand contact to L-serine.

This sequence belongs to the class-II aminoacyl-tRNA synthetase family. Type-1 seryl-tRNA synthetase subfamily. Homodimer. The tRNA molecule binds across the dimer.

The protein localises to the cytoplasm. It carries out the reaction tRNA(Ser) + L-serine + ATP = L-seryl-tRNA(Ser) + AMP + diphosphate + H(+). The catalysed reaction is tRNA(Sec) + L-serine + ATP = L-seryl-tRNA(Sec) + AMP + diphosphate + H(+). It functions in the pathway aminoacyl-tRNA biosynthesis; selenocysteinyl-tRNA(Sec) biosynthesis; L-seryl-tRNA(Sec) from L-serine and tRNA(Sec): step 1/1. Its function is as follows. Catalyzes the attachment of serine to tRNA(Ser). Is also able to aminoacylate tRNA(Sec) with serine, to form the misacylated tRNA L-seryl-tRNA(Sec), which will be further converted into selenocysteinyl-tRNA(Sec). This is Serine--tRNA ligase from Listeria welshimeri serovar 6b (strain ATCC 35897 / DSM 20650 / CCUG 15529 / CIP 8149 / NCTC 11857 / SLCC 5334 / V8).